The sequence spans 568 residues: Urease subunit alpha (568 aa).

Positions 131 to 568 constitute a Urease domain; the sequence is GGMDAHIHFI…LPLAQRYFLY (438 aa). H136, H138, and K219 together coordinate Ni(2+). Residue K219 is modified to N6-carboxylysine. H221 lines the substrate pocket. Ni(2+)-binding residues include H248 and H274. The active-site Proton donor is the H322. Residue D362 coordinates Ni(2+).

It belongs to the metallo-dependent hydrolases superfamily. Urease alpha subunit family. In terms of assembly, heterotrimer of UreA (gamma), UreB (beta) and UreC (alpha) subunits. Three heterotrimers associate to form the active enzyme. Requires Ni cation as cofactor. Post-translationally, carboxylation allows a single lysine to coordinate two nickel ions.

Its subcellular location is the cytoplasm. The enzyme catalyses urea + 2 H2O + H(+) = hydrogencarbonate + 2 NH4(+). It participates in nitrogen metabolism; urea degradation; CO(2) and NH(3) from urea (urease route): step 1/1. This Cereibacter sphaeroides (strain ATCC 17023 / DSM 158 / JCM 6121 / CCUG 31486 / LMG 2827 / NBRC 12203 / NCIMB 8253 / ATH 2.4.1.) (Rhodobacter sphaeroides) protein is Urease subunit alpha.